A 447-amino-acid chain; its full sequence is Coagulation factor VII (447 aa).

An N-terminal signal peptide occupies residues 1–23 (MLSQAWALALLCFLLSLWGSLPA). The propeptide occupies 24-40 (VFLPQEQALSILHRPRR). One can recognise a Gla domain in the interval 41 to 85 (ANGFLEELLPGSLERECREELCSFEEAHEIFRNEERTRQFWVSYN). A 4-carboxyglutamate mark is found at Glu-46, Glu-47, Glu-54, Glu-56, Glu-59, Glu-60, Glu-65, Glu-66, Glu-69, Glu-74, and Glu-75. Cys-57 and Cys-62 are oxidised to a cystine. One can recognise an EGF-like 1; calcium-binding domain in the interval 86–122 (DGDQCASSPCQNGGSCEDQLRSYICFCPDGFEGRNCE). 10 cysteine pairs are disulfide-bonded: Cys-90/Cys-101, Cys-95/Cys-110, Cys-112/Cys-121, Cys-131/Cys-142, Cys-138/Cys-152, Cys-154/Cys-167, Cys-175/Cys-302, Cys-199/Cys-204, Cys-218/Cys-234, and Cys-350/Cys-369. A glycan (O-linked (Glc...) serine) is linked at Ser-92. Ser-92 carries O-linked (Glc...) serine; alternate glycosylation. An O-linked (Xyl...) serine; alternate glycan is attached at Ser-92. O-linked (Fuc) serine glycosylation is present at Ser-100. The EGF-like 2 domain maps to 127–168 (SQLICANDNGGCEQYCGADPGAGRFCWCHEGYALQADGVSCA). Asn-185 is a glycosylation site (N-linked (GlcNAc...) asparagine). One can recognise a Peptidase S1 domain in the interval 193–432 (IVGGHVCPKG…YTAWLRQLMG (240 aa)). His-233 serves as the catalytic Charge relay system. The N-linked (GlcNAc...) asparagine glycan is linked to Asn-243. Asp-282 serves as the catalytic Charge relay system. Substrate is bound at residue Asp-378. Cys-380 and Cys-408 are joined by a disulfide. The active-site Charge relay system is the Ser-384.

Belongs to the peptidase S1 family. In terms of assembly, heterodimer of a light chain and a heavy chain linked by a disulfide bond. The vitamin K-dependent, enzymatic carboxylation of some glutamate residues allows the modified protein to bind calcium. Post-translationally, O-glycosylated. O-fucosylated by POFUT1 on a conserved serine or threonine residue found in the consensus sequence C2-X(4,5)-[S/T]-C3 of EGF domains, where C2 and C3 are the second and third conserved cysteines. In terms of processing, can be either O-glucosylated or O-xylosylated at Ser-92 by POGLUT1. In terms of tissue distribution, plasma.

The protein localises to the secreted. It carries out the reaction Selective cleavage of Arg-|-Ile bond in factor X to form factor Xa.. Initiates the extrinsic pathway of blood coagulation. Serine protease that circulates in the blood in a zymogen form. Factor VII is converted to factor VIIa by factor Xa, factor XIIa, factor IXa, or thrombin by minor proteolysis. In the presence of tissue factor and calcium ions, factor VIIa then converts factor X to factor Xa by limited proteolysis. Factor VIIa also converts factor IX to factor IXa in the presence of tissue factor and calcium. The sequence is that of Coagulation factor VII (F7) from Bos taurus (Bovine).